Consider the following 351-residue polypeptide: N-acetyl-gamma-glutamyl-phosphate reductase (351 aa).

Cys-154 is a catalytic residue.

Belongs to the NAGSA dehydrogenase family. Type 1 subfamily.

It is found in the cytoplasm. It carries out the reaction N-acetyl-L-glutamate 5-semialdehyde + phosphate + NADP(+) = N-acetyl-L-glutamyl 5-phosphate + NADPH + H(+). Its pathway is amino-acid biosynthesis; L-arginine biosynthesis; N(2)-acetyl-L-ornithine from L-glutamate: step 3/4. In terms of biological role, catalyzes the NADPH-dependent reduction of N-acetyl-5-glutamyl phosphate to yield N-acetyl-L-glutamate 5-semialdehyde. This Prochlorococcus marinus (strain MIT 9301) protein is N-acetyl-gamma-glutamyl-phosphate reductase.